The chain runs to 195 residues: ATP-dependent Clp protease proteolytic subunit 1 (195 aa).

S96 (nucleophile) is an active-site residue. H121 is a catalytic residue.

The protein belongs to the peptidase S14 family. Fourteen ClpP subunits assemble into 2 heptameric rings which stack back to back to give a disk-like structure with a central cavity, resembling the structure of eukaryotic proteasomes.

It is found in the cytoplasm. It carries out the reaction Hydrolysis of proteins to small peptides in the presence of ATP and magnesium. alpha-casein is the usual test substrate. In the absence of ATP, only oligopeptides shorter than five residues are hydrolyzed (such as succinyl-Leu-Tyr-|-NHMec, and Leu-Tyr-Leu-|-Tyr-Trp, in which cleavage of the -Tyr-|-Leu- and -Tyr-|-Trp bonds also occurs).. Functionally, cleaves peptides in various proteins in a process that requires ATP hydrolysis. Has a chymotrypsin-like activity. Plays a major role in the degradation of misfolded proteins. In Prochlorococcus marinus (strain MIT 9312), this protein is ATP-dependent Clp protease proteolytic subunit 1.